A 393-amino-acid chain; its full sequence is 1-deoxy-D-xylulose 5-phosphate reductoisomerase (393 aa).

NADPH contacts are provided by T10, G11, S12, I13, Q38, and N124. 1-deoxy-D-xylulose 5-phosphate is bound at residue K125. E126 is a binding site for NADPH. D150 contacts Mn(2+). Positions 151, 152, 179, and 202 each coordinate 1-deoxy-D-xylulose 5-phosphate. E152 contacts Mn(2+). G208 is a binding site for NADPH. S215, N220, K221, and E224 together coordinate 1-deoxy-D-xylulose 5-phosphate. Mn(2+) is bound at residue E224.

The protein belongs to the DXR family. Requires Mg(2+) as cofactor. It depends on Mn(2+) as a cofactor.

It catalyses the reaction 2-C-methyl-D-erythritol 4-phosphate + NADP(+) = 1-deoxy-D-xylulose 5-phosphate + NADPH + H(+). Its pathway is isoprenoid biosynthesis; isopentenyl diphosphate biosynthesis via DXP pathway; isopentenyl diphosphate from 1-deoxy-D-xylulose 5-phosphate: step 1/6. Its function is as follows. Catalyzes the NADPH-dependent rearrangement and reduction of 1-deoxy-D-xylulose-5-phosphate (DXP) to 2-C-methyl-D-erythritol 4-phosphate (MEP). This Ralstonia nicotianae (strain ATCC BAA-1114 / GMI1000) (Ralstonia solanacearum) protein is 1-deoxy-D-xylulose 5-phosphate reductoisomerase.